The primary structure comprises 275 residues: MMNKLCFALPLIFSDASFANGPAQRIISLAPHSTEIAYSAGLGDKLIAVSEMSDYPEQAKDLEKVSNYQGIKLERIIALQPDLVIAWPAGNPAKELEKLEQFGIPIYYSTTGTLEGIATNIEQLSQYSEKPEVGQKAAAEFRAQLEALKEKYNTEDKVSYFYQLSEKPIITVAGKNWPSEVFTFCGGENIFSKGSAPYPQVSIEQVITRQPEVLFASRHAMSNDGMWAEWKNDIPALGNNHVWSLNSDWINRPTSRTLNAITEVCEHFETVRQKR.

An N-terminal signal peptide occupies residues 1 to 19 (MMNKLCFALPLIFSDASFA). Residues 25–272 (RIISLAPHST…EVCEHFETVR (248 aa)) form the Fe/B12 periplasmic-binding domain. A disulfide bridge connects residues Cys185 and Cys265.

This sequence belongs to the BtuF family. In terms of assembly, the complex is composed of two ATP-binding proteins (BtuD), two transmembrane proteins (BtuC) and a solute-binding protein (BtuF).

Its subcellular location is the periplasm. Its function is as follows. Part of the ABC transporter complex BtuCDF involved in vitamin B12 import. Binds vitamin B12 and delivers it to the periplasmic surface of BtuC. This Vibrio campbellii (strain ATCC BAA-1116) protein is Vitamin B12-binding protein.